The primary structure comprises 426 residues: Serine--tRNA ligase (426 aa).

The segment covering 1-15 (MIDVKDLSENPDKFR) has biased composition (basic and acidic residues). The segment at 1-20 (MIDVKDLSENPDKFRASQRA) is disordered. 228 to 230 (TSE) provides a ligand contact to L-serine. ATP is bound by residues 259-261 (RRE) and Val275. Glu282 is a binding site for L-serine. An ATP-binding site is contributed by 346-349 (ELTS). An L-serine-binding site is contributed by Thr386.

Belongs to the class-II aminoacyl-tRNA synthetase family. Type-1 seryl-tRNA synthetase subfamily. As to quaternary structure, homodimer. The tRNA molecule binds across the dimer.

The protein localises to the cytoplasm. The enzyme catalyses tRNA(Ser) + L-serine + ATP = L-seryl-tRNA(Ser) + AMP + diphosphate + H(+). It carries out the reaction tRNA(Sec) + L-serine + ATP = L-seryl-tRNA(Sec) + AMP + diphosphate + H(+). It participates in aminoacyl-tRNA biosynthesis; selenocysteinyl-tRNA(Sec) biosynthesis; L-seryl-tRNA(Sec) from L-serine and tRNA(Sec): step 1/1. Functionally, catalyzes the attachment of serine to tRNA(Ser). Is also able to aminoacylate tRNA(Sec) with serine, to form the misacylated tRNA L-seryl-tRNA(Sec), which will be further converted into selenocysteinyl-tRNA(Sec). The protein is Serine--tRNA ligase of Paenarthrobacter aurescens (strain TC1).